The chain runs to 493 residues: Cobyric acid synthase (493 aa).

Positions 246 to 440 (PIDIAVIKMP…IHGVFDGVVF (195 aa)) constitute a GATase cobBQ-type domain. Residue C326 is the Nucleophile of the active site. The active site involves H432.

Belongs to the CobB/CobQ family. CobQ subfamily.

Its pathway is cofactor biosynthesis; adenosylcobalamin biosynthesis. Functionally, catalyzes amidations at positions B, D, E, and G on adenosylcobyrinic A,C-diamide. NH(2) groups are provided by glutamine, and one molecule of ATP is hydrogenolyzed for each amidation. The sequence is that of Cobyric acid synthase from Clostridium botulinum (strain ATCC 19397 / Type A).